The primary structure comprises 378 residues: MTASPKQRIVVGLSGGVDSAVTAHLLKQQGHEVVGIFMKNWEDDDDSEYCSSNVDFVDAAAVADVIGIEIEHVNFAAEYKDRVFAEFLREYEAGRTPNPDVLCNAEIKFKAFLDHAMRVGAEKIATGHYARVRHNPATGLHELLKGLDPAKDQSYFLHRLNQSQLSRTLFPVGELRKTEVRRIAEEIGLPNAKKKDSTGICFIGERPFREFLNRYIQHAPGPILDDRGRRLGQHVGLSFYTLGQRQGLGIGGVKDKGAQRGGGEHAPWFVARKEVERNVLRVVQGHDHPWLLSHTLQATDANWVAGRPPAAGACAAKTRYRQQDAACTVTQAEGGDFALSFPEAQWAVTPGQSAVLYDGEVCLGGGVITAAGPVNSAA.

ATP-binding positions include Gly12–Ser19 and Met38. An interaction with target base in tRNA region spans residues Asn98–Asp100. Cys103 serves as the catalytic Nucleophile. An intrachain disulfide couples Cys103 to Cys201. Gly127 provides a ligand contact to ATP. The interval Lys151–Gln153 is interaction with tRNA. Cys201 functions as the Cysteine persulfide intermediate in the catalytic mechanism. Residues Arg319–Tyr320 form an interaction with tRNA region.

Belongs to the MnmA/TRMU family.

It is found in the cytoplasm. It catalyses the reaction S-sulfanyl-L-cysteinyl-[protein] + uridine(34) in tRNA + AH2 + ATP = 2-thiouridine(34) in tRNA + L-cysteinyl-[protein] + A + AMP + diphosphate + H(+). Catalyzes the 2-thiolation of uridine at the wobble position (U34) of tRNA, leading to the formation of s(2)U34. The protein is tRNA-specific 2-thiouridylase MnmA of Paracidovorax citrulli (strain AAC00-1) (Acidovorax citrulli).